A 499-amino-acid chain; its full sequence is Multiphosphoryl transfer protein (499 aa).

The region spanning 2 to 142 (LELSESNIHL…AEFCAILMGE (141 aa)) is the PTS EIIA type-2 domain. The active-site Tele-phosphohistidine intermediate; for EIIA activity is the H62. Residue H62 is modified to Phosphohistidine; by HPr. Residues 155–285 (SLDVNTQSLL…SDVETQSVEG (131 aa)) are m domain. Residues 286-376 (AVVGTFTIRN…KAIANGLGEN (91 aa)) form the HPr 1 domain. The active-site Pros-phosphohistidine intermediate; for HPr 1 activity is H300. H300 bears the Phosphohistidine mark. Residues 378 to 409 (SAVPPSEPDTIEIMGDQIHTPAVTEDDNLPAN) form a linker region. Residues 410–499 (AIEAVFVIKN…GAVIESGLGE (90 aa)) enclose the HPr 2 domain. Residue H424 is modified to Phosphohistidine. Catalysis depends on H424, which acts as the Pros-phosphohistidine intermediate; for HPr 2 activity.

The protein resides in the cytoplasm. In terms of biological role, the phosphoenolpyruvate-dependent sugar phosphotransferase system (sugar PTS), a major carbohydrate active transport system, catalyzes the phosphorylation of incoming sugar substrates concomitantly with their translocation across the cell membrane. The enzyme II FruAB PTS system is involved in fructose transport. The protein is Multiphosphoryl transfer protein (fruB) of Haemophilus influenzae (strain ATCC 51907 / DSM 11121 / KW20 / Rd).